Here is a 95-residue protein sequence, read N- to C-terminus: Aspartyl/glutamyl-tRNA(Asn/Gln) amidotransferase subunit C (95 aa).

This sequence belongs to the GatC family. In terms of assembly, heterotrimer of A, B and C subunits.

The catalysed reaction is L-glutamyl-tRNA(Gln) + L-glutamine + ATP + H2O = L-glutaminyl-tRNA(Gln) + L-glutamate + ADP + phosphate + H(+). The enzyme catalyses L-aspartyl-tRNA(Asn) + L-glutamine + ATP + H2O = L-asparaginyl-tRNA(Asn) + L-glutamate + ADP + phosphate + 2 H(+). Functionally, allows the formation of correctly charged Asn-tRNA(Asn) or Gln-tRNA(Gln) through the transamidation of misacylated Asp-tRNA(Asn) or Glu-tRNA(Gln) in organisms which lack either or both of asparaginyl-tRNA or glutaminyl-tRNA synthetases. The reaction takes place in the presence of glutamine and ATP through an activated phospho-Asp-tRNA(Asn) or phospho-Glu-tRNA(Gln). The polypeptide is Aspartyl/glutamyl-tRNA(Asn/Gln) amidotransferase subunit C (Rhizobium johnstonii (strain DSM 114642 / LMG 32736 / 3841) (Rhizobium leguminosarum bv. viciae)).